A 123-amino-acid chain; its full sequence is MMTKEQIIEAVKNMTVLELNELVKAIEEEFGVTAAAPVVVAGGAAAGAEAAAEKTEFDVILADAGAQKIKVIKVVREITGLGLKEAKDLVDNTPKPIKEGIAKEEAEEIKAKLEEAGAKVEIK.

The protein belongs to the bacterial ribosomal protein bL12 family. As to quaternary structure, homodimer. Part of the ribosomal stalk of the 50S ribosomal subunit. Forms a multimeric L10(L12)X complex, where L10 forms an elongated spine to which 2 to 4 L12 dimers bind in a sequential fashion. Binds GTP-bound translation factors.

In terms of biological role, forms part of the ribosomal stalk which helps the ribosome interact with GTP-bound translation factors. Is thus essential for accurate translation. The polypeptide is Large ribosomal subunit protein bL12 (Geobacillus kaustophilus (strain HTA426)).